Here is a 79-residue protein sequence, read N- to C-terminus: Sulfur carrier protein TusA (79 aa).

The Cysteine persulfide intermediate role is filled by Cys-17.

The protein belongs to the sulfur carrier protein TusA family.

The protein localises to the cytoplasm. In terms of biological role, sulfur carrier protein which probably makes part of a sulfur-relay system. The sequence is that of Sulfur carrier protein TusA from Haemophilus influenzae (strain ATCC 51907 / DSM 11121 / KW20 / Rd).